We begin with the raw amino-acid sequence, 297 residues long: GTP cyclohydrolase FolE2 (297 aa).

The protein belongs to the GTP cyclohydrolase IV family.

The catalysed reaction is GTP + H2O = 7,8-dihydroneopterin 3'-triphosphate + formate + H(+). Its pathway is cofactor biosynthesis; 7,8-dihydroneopterin triphosphate biosynthesis; 7,8-dihydroneopterin triphosphate from GTP: step 1/1. Converts GTP to 7,8-dihydroneopterin triphosphate. The polypeptide is GTP cyclohydrolase FolE2 (Pseudomonas fluorescens (strain ATCC BAA-477 / NRRL B-23932 / Pf-5)).